The primary structure comprises 232 residues: MALLLCLVCLTAALAHGCLHCHSNFSKKFSFYRHHVNFKSWWVGDIPVSGALLTDWSDDTMKELHLAIPAKITREKLDQVATAVYQMMDQLYQGKMYFPGYFPNELRNIFREQVHLIQNAIIESRIDCQHRCGIFQYETISCNNCTDSHVACFGYNCESSAQWKSAVQGLLNYINNWHKQDTSMRPRSSAFSWPGTHRATPAFLVSPALRCLEPPHLANLTLEDAAECLKQH.

A signal peptide spans 1–15 (MALLLCLVCLTAALA). Residues asparagine 24 and asparagine 219 are each glycosylated (N-linked (GlcNAc...) asparagine).

Belongs to the Izumo family. As to expression, detected in sperm.

The protein localises to the secreted. This is Izumo sperm-egg fusion protein 4 (IZUMO4) from Homo sapiens (Human).